A 394-amino-acid chain; its full sequence is Lipid-A-disaccharide synthase (394 aa).

It belongs to the LpxB family.

It carries out the reaction 2-N,3-O-bis[(3R)-3-hydroxytetradecanoyl]-alpha-D-glucosaminyl 1-phosphate + UDP-2-N,3-O-bis[(3R)-3-hydroxytetradecanoyl]-alpha-D-glucosamine = lipid A disaccharide (E. coli) + UDP + H(+). It catalyses the reaction a lipid X + a UDP-2-N,3-O-bis[(3R)-3-hydroxyacyl]-alpha-D-glucosamine = a lipid A disaccharide + UDP + H(+). Its pathway is glycolipid biosynthesis; lipid IV(A) biosynthesis; lipid IV(A) from (3R)-3-hydroxytetradecanoyl-[acyl-carrier-protein] and UDP-N-acetyl-alpha-D-glucosamine: step 5/6. In terms of biological role, condensation of UDP-2,3-diacylglucosamine and 2,3-diacylglucosamine-1-phosphate to form lipid A disaccharide, a precursor of lipid A, a phosphorylated glycolipid that anchors the lipopolysaccharide to the outer membrane of the cell. The protein is Lipid-A-disaccharide synthase of Yersinia pestis.